Here is an 883-residue protein sequence, read N- to C-terminus: Valine--tRNA ligase (883 aa).

The 'HIGH' region signature appears at 46-56 (PNVTGKLHLGH). The short motif at 520 to 524 (KMSKS) is the 'KMSKS' region element. Lys-523 contributes to the ATP binding site. The stretch at 809–844 (LADLLNVEEELARLEKELAKWQKELDMVGKKLSNER) forms a coiled coil.

This sequence belongs to the class-I aminoacyl-tRNA synthetase family. ValS type 1 subfamily. As to quaternary structure, monomer.

It is found in the cytoplasm. The enzyme catalyses tRNA(Val) + L-valine + ATP = L-valyl-tRNA(Val) + AMP + diphosphate. Catalyzes the attachment of valine to tRNA(Val). As ValRS can inadvertently accommodate and process structurally similar amino acids such as threonine, to avoid such errors, it has a 'posttransfer' editing activity that hydrolyzes mischarged Thr-tRNA(Val) in a tRNA-dependent manner. The polypeptide is Valine--tRNA ligase (Streptococcus agalactiae serotype V (strain ATCC BAA-611 / 2603 V/R)).